The sequence spans 110 residues: uncharacterized protein (110 aa).

A helical transmembrane segment spans residues 29–49; the sequence is GLAFIFFFLVAFYFFPAFWDL.

The protein resides in the membrane. This is an uncharacterized protein from Saccharomyces cerevisiae (strain ATCC 204508 / S288c) (Baker's yeast).